A 603-amino-acid polypeptide reads, in one-letter code: Penicillin-binding protein activator LpoA (603 aa).

The first 26 residues, 1-26 (MANMTPRKNSVTRLIAPVALALTLAA), serve as a signal peptide directing secretion. The N-palmitoyl cysteine moiety is linked to residue cysteine 27. Cysteine 27 is lipidated: S-diacylglycerol cysteine.

The protein belongs to the LpoA family. Interacts with PBP1a.

The protein resides in the cell outer membrane. In terms of biological role, regulator of peptidoglycan synthesis that is essential for the function of penicillin-binding protein 1A (PBP1a). The protein is Penicillin-binding protein activator LpoA of Aliivibrio fischeri (strain ATCC 700601 / ES114) (Vibrio fischeri).